The sequence spans 121 residues: Methylglyoxal synthase (121 aa).

The 121-residue stretch at 1–121 (MMKVALIAHD…SAELFLRALN (121 aa)) folds into the MGS-like domain. Substrate contacts are provided by residues His-9, Lys-13, 35–38 (TGTT), and 55–56 (SG). Asp-61 acts as the Proton donor/acceptor in catalysis. His-88 contributes to the substrate binding site.

It belongs to the methylglyoxal synthase family.

The catalysed reaction is dihydroxyacetone phosphate = methylglyoxal + phosphate. Functionally, catalyzes the formation of methylglyoxal from dihydroxyacetone phosphate. In Carboxydothermus hydrogenoformans (strain ATCC BAA-161 / DSM 6008 / Z-2901), this protein is Methylglyoxal synthase.